A 380-amino-acid polypeptide reads, in one-letter code: Queuine tRNA-ribosyltransferase (380 aa).

Catalysis depends on aspartate 96, which acts as the Proton acceptor. Substrate is bound by residues 96–100 (DSGGF), aspartate 150, glutamine 193, and glycine 220. Positions 251–257 (GVGAPDS) are RNA binding. Catalysis depends on aspartate 270, which acts as the Nucleophile. The interval 275-279 (TRIAR) is RNA binding; important for wobble base 34 recognition. Zn(2+) is bound by residues cysteine 308, cysteine 310, cysteine 313, and histidine 339.

It belongs to the queuine tRNA-ribosyltransferase family. Homodimer. Within each dimer, one monomer is responsible for RNA recognition and catalysis, while the other monomer binds to the replacement base PreQ1. Zn(2+) serves as cofactor.

The enzyme catalyses 7-aminomethyl-7-carbaguanine + guanosine(34) in tRNA = 7-aminomethyl-7-carbaguanosine(34) in tRNA + guanine. Its pathway is tRNA modification; tRNA-queuosine biosynthesis. Functionally, catalyzes the base-exchange of a guanine (G) residue with the queuine precursor 7-aminomethyl-7-deazaguanine (PreQ1) at position 34 (anticodon wobble position) in tRNAs with GU(N) anticodons (tRNA-Asp, -Asn, -His and -Tyr). Catalysis occurs through a double-displacement mechanism. The nucleophile active site attacks the C1' of nucleotide 34 to detach the guanine base from the RNA, forming a covalent enzyme-RNA intermediate. The proton acceptor active site deprotonates the incoming PreQ1, allowing a nucleophilic attack on the C1' of the ribose to form the product. After dissociation, two additional enzymatic reactions on the tRNA convert PreQ1 to queuine (Q), resulting in the hypermodified nucleoside queuosine (7-(((4,5-cis-dihydroxy-2-cyclopenten-1-yl)amino)methyl)-7-deazaguanosine). This chain is Queuine tRNA-ribosyltransferase, found in Streptococcus uberis (strain ATCC BAA-854 / 0140J).